The sequence spans 196 residues: Dephospho-CoA kinase (196 aa).

Residues 5 to 196 enclose the DPCK domain; sequence IIGLTGGIAT…QVDIALNFEL (192 aa). 13–18 lines the ATP pocket; that stretch reads ATGKTT.

This sequence belongs to the CoaE family.

Its subcellular location is the cytoplasm. The enzyme catalyses 3'-dephospho-CoA + ATP = ADP + CoA + H(+). It functions in the pathway cofactor biosynthesis; coenzyme A biosynthesis; CoA from (R)-pantothenate: step 5/5. Its function is as follows. Catalyzes the phosphorylation of the 3'-hydroxyl group of dephosphocoenzyme A to form coenzyme A. The sequence is that of Dephospho-CoA kinase from Nostoc sp. (strain PCC 7120 / SAG 25.82 / UTEX 2576).